The sequence spans 244 residues: 14-3-3 protein beta/alpha-1 (244 aa).

N-acetylmethionine is present on Met1.

It belongs to the 14-3-3 family. In terms of assembly, homodimer, and heterodimer with other family members. As to expression, expressed in brain, gill, heart, intestine, kidney, liver, ovary, skin, spleen and testis.

Its subcellular location is the cytoplasm. In terms of biological role, adapter protein implicated in the regulation of a large spectrum of both general and specialized signaling pathways. Binds to a large number of partners, usually by recognition of a phosphoserine or phosphothreonine motif. Binding generally results in the modulation of the activity of the binding partner. The sequence is that of 14-3-3 protein beta/alpha-1 from Oncorhynchus mykiss (Rainbow trout).